The sequence spans 235 residues: Ribosomal RNA small subunit methyltransferase G (235 aa).

S-adenosyl-L-methionine-binding positions include G74, F79, 97–99 (EAT), 125–126 (AE), and R144.

Belongs to the methyltransferase superfamily. RNA methyltransferase RsmG family.

Its subcellular location is the cytoplasm. In terms of biological role, specifically methylates the N7 position of a guanine in 16S rRNA. This is Ribosomal RNA small subunit methyltransferase G from Dehalococcoides mccartyi (strain CBDB1).